Consider the following 835-residue polypeptide: MIGILKKVFDVNQRQIKRMQKTVEQIDALESSIKPLTDEQLKGKTLEFKERLTKGETVDDLLPEAFAVVREAATRVLGMRPYGVQLMGGIALHEGNISEMKTGEGKTLTSTLPVYLNALTGKGVHVVTVNEYLAQRDANEMGQLHEFLGLTVGINLNSMSREEKQEAYAADITYSTNNELGFDYLRDNMVLYKEQCVQRPLHFAIIDEVDSILVDEARTPLIISGQAQKSTELYMFANAFVRTLENEKEYSFDVKTKNVMLTEDGITKAEKAFHIENLFDLKHVALLHHINQGLRAHVVMHRDTDYVVQEGEIVIVDQFTGRLMKGRRYSEGLHQAIEAKEGVEIQNESMTLATITFQNYFRMYEKLSGMTGTAKTEEEEFRNIYNMNVIVIPTNKPIIRDDRADLIFKSMEGKFNAVVEDIVNRHKQGQPVLVGTVAIETSELISKMLTRKGVRHNILNAKNHAREADIIAEAGMKGAVTIATNMAGRGTDIKLGDDVKIFGLAVIGTERHESRRIDNQLRGRAGRQGDPGVTQFYLSMEDELMRRFGSDNMKAMMDRLGMDDSQPIESKMVSRAVESAQKRVEGNNYDARKQLLQYDDVLRQQREVIYKQRQEVMESENLRGIIEGMMKSTVERAVALHTQEEIEEDWNIKGLVDYLNTNLLQEGDVKEEELRRLAPEEMSEPIIAKLIERYNDKEKLMPEEQMREFEKVVVFRVVDTKWTEHIDAMDHLREGIHLRAYGQIDPLREYQMEGFAMFESMVASIEEEISRYIMKAEIEQNLERQEVVQGEAVHPSSDGEEAKKKPVVKGDQVGRNDLCKCGSGKKYKNCCGIVQ.

ATP-binding positions include Gln-85, Gly-103–Thr-107, and Asp-492. Positions Val-788–Val-807 are disordered. 4 residues coordinate Zn(2+): Cys-819, Cys-821, Cys-830, and Cys-831.

This sequence belongs to the SecA family. Monomer and homodimer. Part of the essential Sec protein translocation apparatus which comprises SecA, SecYEG and auxiliary proteins SecDF. Other proteins may also be involved. Requires Zn(2+) as cofactor.

It localises to the cell membrane. It is found in the cytoplasm. The catalysed reaction is ATP + H2O + cellular proteinSide 1 = ADP + phosphate + cellular proteinSide 2.. Its function is as follows. Part of the Sec protein translocase complex. Interacts with the SecYEG preprotein conducting channel. Has a central role in coupling the hydrolysis of ATP to the transfer of proteins into and across the cell membrane, serving as an ATP-driven molecular motor driving the stepwise translocation of polypeptide chains across the membrane. In Bacillus cereus (strain G9842), this protein is Protein translocase subunit SecA.